The sequence spans 20 residues: Putative 60 kDa spermidine-binding protein (20 aa).

The interval 1-20 is disordered; it reads SXAAVVEPPETSQNRIAKGE. Residues 10–20 show a composition bias toward polar residues; that stretch reads ETSQNRIAKGE.

In terms of assembly, dimer of 18 kDa and 60 kDa subunit.

The protein localises to the microsome membrane. It localises to the endoplasmic reticulum membrane. Its function is as follows. May have spermidine-binding activity. The protein is Putative 60 kDa spermidine-binding protein of Zea mays (Maize).